The following is a 420-amino-acid chain: Exodeoxyribonuclease 7 large subunit (420 aa).

It belongs to the XseA family. Heterooligomer composed of large and small subunits.

It is found in the cytoplasm. The enzyme catalyses Exonucleolytic cleavage in either 5'- to 3'- or 3'- to 5'-direction to yield nucleoside 5'-phosphates.. In terms of biological role, bidirectionally degrades single-stranded DNA into large acid-insoluble oligonucleotides, which are then degraded further into small acid-soluble oligonucleotides. This Helicobacter pylori (strain Shi470) protein is Exodeoxyribonuclease 7 large subunit.